Reading from the N-terminus, the 255-residue chain is 3-deoxy-manno-octulosonate cytidylyltransferase (255 aa).

It belongs to the KdsB family.

The protein resides in the cytoplasm. The catalysed reaction is 3-deoxy-alpha-D-manno-oct-2-ulosonate + CTP = CMP-3-deoxy-beta-D-manno-octulosonate + diphosphate. It functions in the pathway nucleotide-sugar biosynthesis; CMP-3-deoxy-D-manno-octulosonate biosynthesis; CMP-3-deoxy-D-manno-octulosonate from 3-deoxy-D-manno-octulosonate and CTP: step 1/1. The protein operates within bacterial outer membrane biogenesis; lipopolysaccharide biosynthesis. Activates KDO (a required 8-carbon sugar) for incorporation into bacterial lipopolysaccharide in Gram-negative bacteria. This Polaromonas sp. (strain JS666 / ATCC BAA-500) protein is 3-deoxy-manno-octulosonate cytidylyltransferase.